The sequence spans 417 residues: Riboflavin biosynthesis protein RibBA (417 aa).

The tract at residues 1 to 204 is DHBP synthase; the sequence is MTRFDSIERA…IADLIAWRRK (204 aa). D-ribulose 5-phosphate-binding positions include 28 to 29, Asp-33, 141 to 145, and Glu-165; these read RE and RPGHT. Glu-29 serves as a coordination point for Mg(2+). Residue His-144 coordinates Mg(2+). The segment at 205–417 is GTP cyclohydrolase II; the sequence is HEKHVERVAS…LDDFEAGEML (213 aa). 259 to 263 is a GTP binding site; the sequence is RVHSE. The Zn(2+) site is built by Cys-264, Cys-275, and Cys-277. GTP contacts are provided by residues Gln-280, 303–305, and Thr-325; that span reads EGR. Residue Asp-337 is the Proton acceptor; for GTP cyclohydrolase activity of the active site. Residue Arg-339 is the Nucleophile; for GTP cyclohydrolase activity of the active site. Residues Thr-360 and Lys-365 each contribute to the GTP site.

It in the N-terminal section; belongs to the DHBP synthase family. The protein in the C-terminal section; belongs to the GTP cyclohydrolase II family. It depends on Mg(2+) as a cofactor. Requires Mn(2+) as cofactor. The cofactor is Zn(2+).

It carries out the reaction D-ribulose 5-phosphate = (2S)-2-hydroxy-3-oxobutyl phosphate + formate + H(+). The enzyme catalyses GTP + 4 H2O = 2,5-diamino-6-hydroxy-4-(5-phosphoribosylamino)-pyrimidine + formate + 2 phosphate + 3 H(+). The protein operates within cofactor biosynthesis; riboflavin biosynthesis; 2-hydroxy-3-oxobutyl phosphate from D-ribulose 5-phosphate: step 1/1. It participates in cofactor biosynthesis; riboflavin biosynthesis; 5-amino-6-(D-ribitylamino)uracil from GTP: step 1/4. In terms of biological role, catalyzes the conversion of D-ribulose 5-phosphate to formate and 3,4-dihydroxy-2-butanone 4-phosphate. Its function is as follows. Catalyzes the conversion of GTP to 2,5-diamino-6-ribosylamino-4(3H)-pyrimidinone 5'-phosphate (DARP), formate and pyrophosphate. The polypeptide is Riboflavin biosynthesis protein RibBA (Rhodococcus jostii (strain RHA1)).